Reading from the N-terminus, the 232-residue chain is Large ribosomal subunit protein uL1 (232 aa).

It belongs to the universal ribosomal protein uL1 family. Part of the 50S ribosomal subunit.

Binds directly to 23S rRNA. The L1 stalk is quite mobile in the ribosome, and is involved in E site tRNA release. Its function is as follows. Protein L1 is also a translational repressor protein, it controls the translation of the L11 operon by binding to its mRNA. The sequence is that of Large ribosomal subunit protein uL1 from Porphyromonas gingivalis (strain ATCC 33277 / DSM 20709 / CIP 103683 / JCM 12257 / NCTC 11834 / 2561).